Consider the following 567-residue polypeptide: Urease subunit alpha (567 aa).

Residues 129–567 form the Urease domain; it reads GGIDVHVHFI…VPMSQRYFLF (439 aa). Ni(2+)-binding residues include H134, H136, and K217. N6-carboxylysine is present on K217. Position 219 (H219) interacts with substrate. Ni(2+) contacts are provided by H246 and H272. H320 (proton donor) is an active-site residue. D360 is a binding site for Ni(2+).

It belongs to the metallo-dependent hydrolases superfamily. Urease alpha subunit family. In terms of assembly, heterotrimer of UreA (gamma), UreB (beta) and UreC (alpha) subunits. Three heterotrimers associate to form the active enzyme. Ni cation is required as a cofactor. Post-translationally, carboxylation allows a single lysine to coordinate two nickel ions.

Its subcellular location is the cytoplasm. The catalysed reaction is urea + 2 H2O + H(+) = hydrogencarbonate + 2 NH4(+). Its pathway is nitrogen metabolism; urea degradation; CO(2) and NH(3) from urea (urease route): step 1/1. This Blochmanniella floridana protein is Urease subunit alpha.